Here is a 258-residue protein sequence, read N- to C-terminus: MTATPLYCAEPARLDTARRLCERFSLPLIKQRPADGYWLELGSERLELLTTGKHGAVYAEFVEGAARHRREQGGGRGQPVAKAVGLKGAKDLPHVADATAGLGRDSFVLATLGCRVTMVERSPVAAALLADALERAQRDETTRDIAARMTLVHANSRNWLAGLTEAQRPDVVFVDPMFPDTDKKSAAAKKDMQAFQQVIGDDMDSAELLAAAIAAARVRVVVKRPRLGAAIAGVKPSAVLDGKSTRFDLYVIKALASG.

S-adenosyl-L-methionine contacts are provided by residues 104–105 (RD), 120–121 (ER), and aspartate 175.

This sequence belongs to the methyltransferase superfamily. RsmJ family.

Its subcellular location is the cytoplasm. The enzyme catalyses guanosine(1516) in 16S rRNA + S-adenosyl-L-methionine = N(2)-methylguanosine(1516) in 16S rRNA + S-adenosyl-L-homocysteine + H(+). Specifically methylates the guanosine in position 1516 of 16S rRNA. The sequence is that of Ribosomal RNA small subunit methyltransferase J from Chromobacterium violaceum (strain ATCC 12472 / DSM 30191 / JCM 1249 / CCUG 213 / NBRC 12614 / NCIMB 9131 / NCTC 9757 / MK).